Here is a 219-residue protein sequence, read N- to C-terminus: Large ribosomal subunit protein uL3 (219 aa).

This sequence belongs to the universal ribosomal protein uL3 family. Part of the 50S ribosomal subunit. Forms a cluster with proteins L14 and L19.

One of the primary rRNA binding proteins, it binds directly near the 3'-end of the 23S rRNA, where it nucleates assembly of the 50S subunit. In Corynebacterium kroppenstedtii (strain DSM 44385 / JCM 11950 / CIP 105744 / CCUG 35717), this protein is Large ribosomal subunit protein uL3.